A 194-amino-acid chain; its full sequence is Peptide deformylase (194 aa).

2 residues coordinate Fe cation: C105 and H147. E148 is a catalytic residue. H151 contributes to the Fe cation binding site.

It belongs to the polypeptide deformylase family. Fe(2+) is required as a cofactor.

The enzyme catalyses N-terminal N-formyl-L-methionyl-[peptide] + H2O = N-terminal L-methionyl-[peptide] + formate. Functionally, removes the formyl group from the N-terminal Met of newly synthesized proteins. Requires at least a dipeptide for an efficient rate of reaction. N-terminal L-methionine is a prerequisite for activity but the enzyme has broad specificity at other positions. In Flavobacterium psychrophilum (strain ATCC 49511 / DSM 21280 / CIP 103535 / JIP02/86), this protein is Peptide deformylase.